Consider the following 470-residue polypeptide: MNAATKLPGELGPIHFVGIGGIGMSGIAEVLMTLGYRVQGSDAKASKITERLVSLGATFFEGQRAGNLGEAAVVVISSAIKKGNPELEEARLRGLPVVRRAEMLAELMRMRSNIAIAGTHGKTTTTTMVATLLDKGGFDPTVINGGVIHAYGSNARAGAGEWMVVEADESDGSFNRLPATIAIVTNIDPEHMEHWGSFDALRKGFYDFVTNIPFYGLAVCCTDHAEVQALVGRVTDRRIVTFGFNAQADVRAINLRYENGIAHFDVALQSEGTGHVIEGMSLPMPGDHNVSNALAAVAVARHLGMKKDEIREALAAFGGVNRRFTKVGEVGGVTIIDDYGHHPVEIAAVLKAARQAVKGRVIAVHQPHRYSRLHSLFDDFCTCFNEADVVAIAEVYAAGEDPIPGAGRDDLVAGLIAHGHRHARAILCEDDLERLVREQARPGDMVVCLGAGTISAWANNLPARLMGKAA.

Residue 118–124 (GTHGKTT) participates in ATP binding.

This sequence belongs to the MurCDEF family.

It is found in the cytoplasm. The catalysed reaction is UDP-N-acetyl-alpha-D-muramate + L-alanine + ATP = UDP-N-acetyl-alpha-D-muramoyl-L-alanine + ADP + phosphate + H(+). It functions in the pathway cell wall biogenesis; peptidoglycan biosynthesis. Its function is as follows. Cell wall formation. This Cereibacter sphaeroides (strain KD131 / KCTC 12085) (Rhodobacter sphaeroides) protein is UDP-N-acetylmuramate--L-alanine ligase.